We begin with the raw amino-acid sequence, 234 residues long: 1-(5-phosphoribosyl)-5-[(5-phosphoribosylamino)methylideneamino] imidazole-4-carboxamide isomerase (234 aa).

The active-site Proton acceptor is Asp9. Asp131 functions as the Proton donor in the catalytic mechanism.

The protein belongs to the HisA/HisF family.

It localises to the cytoplasm. The catalysed reaction is 1-(5-phospho-beta-D-ribosyl)-5-[(5-phospho-beta-D-ribosylamino)methylideneamino]imidazole-4-carboxamide = 5-[(5-phospho-1-deoxy-D-ribulos-1-ylimino)methylamino]-1-(5-phospho-beta-D-ribosyl)imidazole-4-carboxamide. It participates in amino-acid biosynthesis; L-histidine biosynthesis; L-histidine from 5-phospho-alpha-D-ribose 1-diphosphate: step 4/9. The chain is 1-(5-phosphoribosyl)-5-[(5-phosphoribosylamino)methylideneamino] imidazole-4-carboxamide isomerase from Staphylococcus aureus (strain JH1).